The sequence spans 427 residues: Glutamate-1-semialdehyde 2,1-aminomutase (427 aa).

Lys268 is subject to N6-(pyridoxal phosphate)lysine.

Belongs to the class-III pyridoxal-phosphate-dependent aminotransferase family. HemL subfamily. It depends on pyridoxal 5'-phosphate as a cofactor.

It is found in the cytoplasm. It carries out the reaction (S)-4-amino-5-oxopentanoate = 5-aminolevulinate. It participates in porphyrin-containing compound metabolism; protoporphyrin-IX biosynthesis; 5-aminolevulinate from L-glutamyl-tRNA(Glu): step 2/2. This is Glutamate-1-semialdehyde 2,1-aminomutase from Methanococcus vannielii (strain ATCC 35089 / DSM 1224 / JCM 13029 / OCM 148 / SB).